Reading from the N-terminus, the 292-residue chain is Xanthine dehydrogenase FAD-binding subunit (292 aa).

An FAD-binding PCMH-type domain is found at 1 to 176 (MFDFASYHRA…VAFHFPPQPK (176 aa)). Residues 27 to 34 (KLLAGGTD), 109 to 113 (ATYGG), Ile-165, and Phe-184 each bind FAD.

As to quaternary structure, heterotrimer of XdhA, XdhB and XdhC. FAD serves as cofactor.

It carries out the reaction xanthine + NAD(+) + H2O = urate + NADH + H(+). The enzyme catalyses hypoxanthine + NAD(+) + H2O = xanthine + NADH + H(+). The protein operates within purine metabolism; hypoxanthine degradation; urate from hypoxanthine: step 1/2. It functions in the pathway purine metabolism; hypoxanthine degradation; urate from hypoxanthine: step 2/2. Presumed to be a dehydrogenase, but possibly an oxidase. Participates in limited purine salvage (requires aspartate) but does not support aerobic growth on purines as the sole carbon source (purine catabolism). The chain is Xanthine dehydrogenase FAD-binding subunit (xdhB) from Escherichia coli O157:H7.